The primary structure comprises 306 residues: Homoserine O-acetyltransferase (306 aa).

The active-site Acyl-thioester intermediate is Cys142. Residues Lys163 and Ser194 each coordinate substrate. The active-site Proton acceptor is His237. Glu239 is a catalytic residue. Arg251 contributes to the substrate binding site.

The protein belongs to the MetA family.

The protein localises to the cytoplasm. The catalysed reaction is L-homoserine + acetyl-CoA = O-acetyl-L-homoserine + CoA. Its pathway is amino-acid biosynthesis; L-methionine biosynthesis via de novo pathway; O-acetyl-L-homoserine from L-homoserine: step 1/1. Functionally, transfers an acetyl group from acetyl-CoA to L-homoserine, forming acetyl-L-homoserine. The polypeptide is Homoserine O-acetyltransferase (Clostridium tetani (strain Massachusetts / E88)).